Consider the following 360-residue polypeptide: Phospho-N-acetylmuramoyl-pentapeptide-transferase (360 aa).

10 helical membrane-spanning segments follow: residues alanine 26 to lysine 46, glycine 70 to tryptophan 90, serine 94 to valine 114, tryptophan 132 to glycine 152, valine 168 to serine 188, glycine 199 to threonine 219, alanine 236 to phenylalanine 256, valine 263 to leucine 283, leucine 288 to valine 308, and valine 338 to lysine 358.

Belongs to the glycosyltransferase 4 family. MraY subfamily. The cofactor is Mg(2+).

It localises to the cell inner membrane. It catalyses the reaction UDP-N-acetyl-alpha-D-muramoyl-L-alanyl-gamma-D-glutamyl-meso-2,6-diaminopimeloyl-D-alanyl-D-alanine + di-trans,octa-cis-undecaprenyl phosphate = di-trans,octa-cis-undecaprenyl diphospho-N-acetyl-alpha-D-muramoyl-L-alanyl-D-glutamyl-meso-2,6-diaminopimeloyl-D-alanyl-D-alanine + UMP. Its pathway is cell wall biogenesis; peptidoglycan biosynthesis. In terms of biological role, catalyzes the initial step of the lipid cycle reactions in the biosynthesis of the cell wall peptidoglycan: transfers peptidoglycan precursor phospho-MurNAc-pentapeptide from UDP-MurNAc-pentapeptide onto the lipid carrier undecaprenyl phosphate, yielding undecaprenyl-pyrophosphoryl-MurNAc-pentapeptide, known as lipid I. This chain is Phospho-N-acetylmuramoyl-pentapeptide-transferase, found in Vibrio parahaemolyticus serotype O3:K6 (strain RIMD 2210633).